A 249-amino-acid polypeptide reads, in one-letter code: Metallo-beta-lactamase type 2 (249 aa).

Positions 1-22 (MMKKMKWALVLALGLTGLNAFG) are cleaved as a signal peptide. The Zn(2+) site is built by histidine 98, histidine 100, aspartate 102, histidine 161, and cysteine 180. Residue lysine 183 participates in substrate binding. Histidine 222 lines the Zn(2+) pocket.

Belongs to the metallo-beta-lactamase superfamily. Class-B beta-lactamase family. Monomer. Zn(2+) is required as a cofactor.

Its subcellular location is the periplasm. It carries out the reaction a beta-lactam + H2O = a substituted beta-amino acid. Its function is as follows. Confers resistance to the different beta-lactams antibiotics (penicillin, cephalosporin and carbapenem) via the hydrolysis of the beta-lactam ring. This is Metallo-beta-lactamase type 2 (blaB4) from Elizabethkingia meningoseptica (Chryseobacterium meningosepticum).